A 212-amino-acid chain; its full sequence is Small ribosomal subunit protein eS6 (212 aa).

It belongs to the eukaryotic ribosomal protein eS6 family.

The chain is Small ribosomal subunit protein eS6 from Metallosphaera sedula (strain ATCC 51363 / DSM 5348 / JCM 9185 / NBRC 15509 / TH2).